Reading from the N-terminus, the 368-residue chain is Terpene cyclase penA (368 aa).

The next 6 helical transmembrane spans lie at 10–30, 81–101, 118–138, 192–212, 233–253, and 334–354; these read IILA…NGFI, LSLY…ILLM, LTGL…LLAM, LFIA…GIAH, FALA…FLSI, and LATM…YWTA.

This sequence belongs to the membrane-bound ascI terpene cyclase family.

The protein resides in the membrane. It functions in the pathway secondary metabolite biosynthesis. In terms of biological role, part of the gene cluster that mediates the biosynthesis of the indole diterpenes penitrems. The geranylgeranyl diphosphate (GGPP) synthase penG catalyzes the first step in penitrem biosynthesis via conversion of farnesyl pyrophosphate and isopentyl pyrophosphate into geranylgeranyl pyrophosphate (GGPP). Condensation of indole-3-glycerol phosphate with GGPP by the prenyl transferase penC then forms 3-geranylgeranylindole (3-GGI). Epoxidation by the FAD-dependent monooxygenase penM leads to a epoxidized-GGI that is substrate of the terpene cyclase penB for cyclization to yield paspaline. Paspaline is subsequently converted to 13-desoxypaxilline by the cytochrome P450 monooxygenase penP, the latter being then converted to paxilline by the cytochrome P450 monooxygenase penQ. Paxilline is converted to beta-paxitriol via C-10 ketoreduction by the short-chain dehydrogenase PC-15 which can be monoprenylated at the C-20 by the indole diterpene prenyltransferase penD. A two-step elimination (acetylation and elimination) process performed by the O-acetyltransferase PC-16 and the P.simplicissimum ptmI-ortholog not yet identified in P.crustosum, leads to the production of the prenylated form of penijanthine. The FAD-linked oxidoreductase ptmO then converts the prenylated form of penijanthine into PC-M5 which is in turn transformed into PC-M4 by the aromatic dimethylallyltransferase PC-22. A series of oxidation steps involving 4 cytochrome P450 monooxygenases (PC-21, PC-05, PC-23, PC-20) and a FAD-dependent monooxygenase (PC-14) are required for the transformation of PC-M4 to penitrems A and E. Synthesis of these final products is proposed to proceed via penitrems D and C (PC-21, PC-05, PC-14) and penitrems B and F (PC-21, PC-05, PC-14, PC-23). This Penicillium crustosum (Blue mold fungus) protein is Terpene cyclase penA.